The sequence spans 200 residues: NADH-quinone oxidoreductase subunit B 2 (200 aa).

4 residues coordinate [4Fe-4S] cluster: Cys79, Cys80, Cys144, and Cys174.

It belongs to the complex I 20 kDa subunit family. NDH-1 is composed of 14 different subunits. Subunits NuoB, C, D, E, F, and G constitute the peripheral sector of the complex. The cofactor is [4Fe-4S] cluster.

It localises to the cell inner membrane. It catalyses the reaction a quinone + NADH + 5 H(+)(in) = a quinol + NAD(+) + 4 H(+)(out). Functionally, NDH-1 shuttles electrons from NADH, via FMN and iron-sulfur (Fe-S) centers, to quinones in the respiratory chain. The immediate electron acceptor for the enzyme in this species is believed to be ubiquinone. Couples the redox reaction to proton translocation (for every two electrons transferred, four hydrogen ions are translocated across the cytoplasmic membrane), and thus conserves the redox energy in a proton gradient. In Rhodopseudomonas palustris (strain BisA53), this protein is NADH-quinone oxidoreductase subunit B 2.